Consider the following 200-residue polypeptide: Integrin beta-1-binding protein 1 (200 aa).

The segment covering 1–10 has biased composition (basic residues); it reads MFRKGKKRHS. A disordered region spans residues 1 to 56; that stretch reads MFRKGKKRHSSSSSQSSEISTKSKSVDSSLGGLSRSSTVASLDTDSTKSSGQSNNN. The Nuclear localization signal motif lies at 6 to 7; sequence KK. The segment covering 11–29 has biased composition (low complexity); it reads SSSSQSSEISTKSKSVDSS. Residues 34–56 are compositionally biased toward polar residues; it reads SRSSTVASLDTDSTKSSGQSNNN. Residue Thr38 is modified to Phosphothreonine; by CaMK2. Phosphoserine is present on Ser41. Positions 58–200 constitute a PID domain; the sequence is DTCAEFRIKY…FDSVLTSEKP (143 aa). An interaction with KRIT1 region spans residues 136-139; it reads YLII. The interaction with ITGB1 stretch occupies residues 139-141; sequence IRM.

As to quaternary structure, interacts (via N-terminus and PTB domain) with ROCK1. Found in a complex, at least composed of ITGB1BP1, KRIT1 and RAP1A. Interacts (via C-terminal region) with ITGB1 (via C-terminal cytoplasmic tail); the interaction prevents talin TLN1 binding to ITGB1 and KRIT1 and ITGB1 compete for the same binding site. Interacts with KRIT1 (via N-terminal NPXY motif); the interaction induces the opening conformation of KRIT1 and KRIT1 and ITGB1 compete for the same binding site. Isoform 2 does not interact with ITGB1. Interacts with CDC42 (GTP- or GDP-bound form); the interaction is increased with the CDC42-membrane bound forms and prevents both CDC42 activation and cell spreading. Interacts (via C-terminal domain region) with NME2. Interacts with FERMT2 and RAC1. In terms of processing, phosphorylation at Thr-38 seems to enhance integrin alpha5beta1-mediated cell adhesion. The degree of phosphorylation is regulated by integrin-dependent cell-matrix interaction.

The protein resides in the nucleus. Its subcellular location is the cytoplasm. It is found in the cytoskeleton. It localises to the cell membrane. The protein localises to the cell projection. The protein resides in the lamellipodium. Its subcellular location is the ruffle. In terms of biological role, key regulator of the integrin-mediated cell-matrix interaction signaling by binding to the ITGB1 cytoplasmic tail and preventing the activation of integrin alpha-5/beta-1 (heterodimer of ITGA5 and ITGB1) by talin or FERMT1. Plays a role in cell proliferation, differentiation, spreading, adhesion and migration in the context of mineralization and bone development and angiogenesis. Stimulates cellular proliferation in a fibronectin-dependent manner. Involved in the regulation of beta-1 integrin-containing focal adhesion (FA) site dynamics by controlling its assembly rate during cell adhesion; inhibits beta-1 integrin clustering within FA by directly competing with talin TLN1, and hence stimulates osteoblast spreading and migration in a fibronectin- and/or collagen-dependent manner. Acts as a guanine nucleotide dissociation inhibitor (GDI) by regulating Rho family GTPases during integrin-mediated cell matrix adhesion; reduces the level of active GTP-bound form of both CDC42 and RAC1 GTPases upon cell adhesion to fibronectin. Stimulates the release of active CDC42 from the membranes to maintain it in an inactive cytoplasmic pool. Participates in the translocation of the Rho-associated protein kinase ROCK1 to membrane ruffles at cell leading edges of the cell membrane, leading to an increase of myoblast cell migration on laminin. Plays a role in bone mineralization at a late stage of osteoblast differentiation; modulates the dynamic formation of focal adhesions into fibrillar adhesions, which are adhesive structures responsible for fibronectin deposition and fibrillogenesis. Plays a role in blood vessel development; acts as a negative regulator of angiogenesis by attenuating endothelial cell proliferation and migration, lumen formation and sprouting angiogenesis by promoting AKT phosphorylation and inhibiting ERK1/2 phosphorylation through activation of the Notch signaling pathway. Promotes transcriptional activity of the MYC promoter. The protein is Integrin beta-1-binding protein 1 (ITGB1BP1) of Bos taurus (Bovine).